The chain runs to 142 residues: MVLSGEDKSNIKAAWGKIGGHGAEYGAEALERMFASFPTTKTYFPHFDVSHGSAQVKGHGKKVADALASAAGHLDDLPGALSALSDLHAHKLRVDPVNFKLLSHCLLVTLASHHPADFTPAVHASLDKFLASVSTVLTSKYR.

A Globin domain is found at 2–142; it reads VLSGEDKSNI…VSTVLTSKYR (141 aa). Serine 4 carries the phosphoserine modification. N6-succinyllysine is present on residues lysine 8 and lysine 12. Lysine 17 bears the N6-acetyllysine; alternate mark. Lysine 17 is subject to N6-succinyllysine; alternate. Tyrosine 25 bears the Phosphotyrosine mark. Serine 36 carries the post-translational modification Phosphoserine. Residue lysine 41 is modified to N6-succinyllysine. Serine 50 carries the phosphoserine modification. O2 is bound at residue histidine 59. Histidine 88 lines the heme b pocket. Residue serine 103 is modified to Phosphoserine. Phosphothreonine is present on threonine 109. 3 positions are modified to phosphoserine: serine 112, serine 125, and serine 132. 2 positions are modified to phosphothreonine: threonine 135 and threonine 138. The residue at position 139 (serine 139) is a Phosphoserine.

It belongs to the globin family. In terms of assembly, heterotetramer of two alpha chains and two beta chains. As to expression, red blood cells.

Involved in oxygen transport from the lung to the various peripheral tissues. Functionally, hemopressin acts as an antagonist peptide of the cannabinoid receptor CNR1. Hemopressin-binding efficiently blocks cannabinoid receptor CNR1 and subsequent signaling. This chain is Hemoglobin subunit alpha (Hba), found in Mus musculus (Mouse).